The sequence spans 408 residues: 3-ketoacyl-CoA thiolase B, peroxisomal (408 aa).

Residue Cys112 is the Acyl-thioester intermediate of the active site. Catalysis depends on proton acceptor residues His366 and Cys394.

This sequence belongs to the thiolase-like superfamily. Thiolase family. As to quaternary structure, homodimer.

It is found in the peroxisome. It catalyses the reaction an acyl-CoA + acetyl-CoA = a 3-oxoacyl-CoA + CoA. The protein operates within lipid metabolism; fatty acid metabolism. This is 3-ketoacyl-CoA thiolase B, peroxisomal from Candida tropicalis (Yeast).